Consider the following 352-residue polypeptide: UDP-N-acetylglucosamine--N-acetylmuramyl-(pentapeptide) pyrophosphoryl-undecaprenol N-acetylglucosamine transferase 2 (352 aa).

UDP-N-acetyl-alpha-D-glucosamine contacts are provided by residues 11–13 (SAG), Arg-164, Ser-194, and Gln-289.

It belongs to the glycosyltransferase 28 family. MurG subfamily.

The protein resides in the cell membrane. The enzyme catalyses di-trans,octa-cis-undecaprenyl diphospho-N-acetyl-alpha-D-muramoyl-L-alanyl-D-glutamyl-meso-2,6-diaminopimeloyl-D-alanyl-D-alanine + UDP-N-acetyl-alpha-D-glucosamine = di-trans,octa-cis-undecaprenyl diphospho-[N-acetyl-alpha-D-glucosaminyl-(1-&gt;4)]-N-acetyl-alpha-D-muramoyl-L-alanyl-D-glutamyl-meso-2,6-diaminopimeloyl-D-alanyl-D-alanine + UDP + H(+). It functions in the pathway cell wall biogenesis; peptidoglycan biosynthesis. Functionally, cell wall formation. Catalyzes the transfer of a GlcNAc subunit on undecaprenyl-pyrophosphoryl-MurNAc-pentapeptide (lipid intermediate I) to form undecaprenyl-pyrophosphoryl-MurNAc-(pentapeptide)GlcNAc (lipid intermediate II). The chain is UDP-N-acetylglucosamine--N-acetylmuramyl-(pentapeptide) pyrophosphoryl-undecaprenol N-acetylglucosamine transferase 2 from Bacillus anthracis.